We begin with the raw amino-acid sequence, 156 residues long: 6,7-dimethyl-8-ribityllumazine synthase (156 aa).

5-amino-6-(D-ribitylamino)uracil-binding positions include Phe-22, 57–59, and 81–83; these read AYE and TVI. 86-87 serves as a coordination point for (2S)-2-hydroxy-3-oxobutyl phosphate; sequence GT. His-89 functions as the Proton donor in the catalytic mechanism. Position 114 (Phe-114) interacts with 5-amino-6-(D-ribitylamino)uracil. Residue Arg-128 coordinates (2S)-2-hydroxy-3-oxobutyl phosphate.

It belongs to the DMRL synthase family. Forms an icosahedral capsid composed of 60 subunits, arranged as a dodecamer of pentamers.

It carries out the reaction (2S)-2-hydroxy-3-oxobutyl phosphate + 5-amino-6-(D-ribitylamino)uracil = 6,7-dimethyl-8-(1-D-ribityl)lumazine + phosphate + 2 H2O + H(+). Its pathway is cofactor biosynthesis; riboflavin biosynthesis; riboflavin from 2-hydroxy-3-oxobutyl phosphate and 5-amino-6-(D-ribitylamino)uracil: step 1/2. In terms of biological role, catalyzes the formation of 6,7-dimethyl-8-ribityllumazine by condensation of 5-amino-6-(D-ribitylamino)uracil with 3,4-dihydroxy-2-butanone 4-phosphate. This is the penultimate step in the biosynthesis of riboflavin. The polypeptide is 6,7-dimethyl-8-ribityllumazine synthase (Proteus mirabilis (strain HI4320)).